A 365-amino-acid polypeptide reads, in one-letter code: NAD(P)H-quinone oxidoreductase subunit 1, chloroplastic (365 aa).

6 helical membrane passes run 32–52 (LFPILILVLGITIGVLVIVWL), 98–118 (YLFSIGPSIAVISILLGYLII), 129–149 (LSIGVFLWIAVSSIAPIGLLM), 257–279 (LFYVASYLNLLISSLFVTVLYLG), 302–322 (VFGTTIGIFITLAKTFLFLFI), and 338–358 (LLNLGWKFLLPISLGNLLLTT).

The protein belongs to the complex I subunit 1 family. In terms of assembly, NDH is composed of at least 16 different subunits, 5 of which are encoded in the nucleus.

It is found in the plastid. It localises to the chloroplast thylakoid membrane. The catalysed reaction is a plastoquinone + NADH + (n+1) H(+)(in) = a plastoquinol + NAD(+) + n H(+)(out). It carries out the reaction a plastoquinone + NADPH + (n+1) H(+)(in) = a plastoquinol + NADP(+) + n H(+)(out). Functionally, NDH shuttles electrons from NAD(P)H:plastoquinone, via FMN and iron-sulfur (Fe-S) centers, to quinones in the photosynthetic chain and possibly in a chloroplast respiratory chain. The immediate electron acceptor for the enzyme in this species is believed to be plastoquinone. Couples the redox reaction to proton translocation, and thus conserves the redox energy in a proton gradient. The sequence is that of NAD(P)H-quinone oxidoreductase subunit 1, chloroplastic from Spinacia oleracea (Spinach).